We begin with the raw amino-acid sequence, 388 residues long: Succinate--CoA ligase [ADP-forming] subunit beta (388 aa).

In terms of domain architecture, ATP-grasp spans 9–244 (KQLFAEFGLP…PSQEDEREAH (236 aa)). Residues K46, 53–55 (GRG), E99, S102, and E107 each bind ATP. The Mg(2+) site is built by N199 and D213. Substrate-binding positions include N264 and 321-323 (GIV).

This sequence belongs to the succinate/malate CoA ligase beta subunit family. In terms of assembly, heterotetramer of two alpha and two beta subunits. It depends on Mg(2+) as a cofactor.

The catalysed reaction is succinate + ATP + CoA = succinyl-CoA + ADP + phosphate. It catalyses the reaction GTP + succinate + CoA = succinyl-CoA + GDP + phosphate. It participates in carbohydrate metabolism; tricarboxylic acid cycle; succinate from succinyl-CoA (ligase route): step 1/1. Succinyl-CoA synthetase functions in the citric acid cycle (TCA), coupling the hydrolysis of succinyl-CoA to the synthesis of either ATP or GTP and thus represents the only step of substrate-level phosphorylation in the TCA. The beta subunit provides nucleotide specificity of the enzyme and binds the substrate succinate, while the binding sites for coenzyme A and phosphate are found in the alpha subunit. In Vibrio atlanticus (strain LGP32) (Vibrio splendidus (strain Mel32)), this protein is Succinate--CoA ligase [ADP-forming] subunit beta.